The following is a 77-amino-acid chain: Tachyplesin-1 (77 aa).

A signal peptide spans 1–23 (MKKLVIALCLMMVLAVMVEEAEA). Cystine bridges form between Cys-26–Cys-39 and Cys-30–Cys-35. An Arginine amide modification is found at Arg-40. The propeptide occupies 41 to 77 (GKRNEVRQYRDRGYDVRAIPEETFFTRQDEDEDDDEE).

It belongs to the tachyplesin/polyphemusin family. As to expression, hemocytes.

The protein resides in the secreted. Its function is as follows. Significantly inhibits the growth of Gram-negative and Gram-positive bacteria. In Tachypleus tridentatus (Japanese horseshoe crab), this protein is Tachyplesin-1.